Reading from the N-terminus, the 406-residue chain is ATP-dependent RNA helicase eIF4A (406 aa).

The Q motif signature appears at 25-53 (DSFDAMDLKPELLRGVYAYGFERPSAIQQ). Residues 56–226 (ILPIIKGNDV…TKFMRDPVRI (171 aa)) enclose the Helicase ATP-binding domain. 69-76 (AQSGTGKT) contributes to the ATP binding site. Residues 174–177 (DEAD) carry the DEAD box motif. The 162-residue stretch at 237-398 (GIKQFYIAVE…EMPMNVAGKF (162 aa)) folds into the Helicase C-terminal domain.

This sequence belongs to the DEAD box helicase family. eIF4A subfamily. In terms of assembly, component of the eIF4F complex, which composition varies with external and internal environmental conditions. It is composed of at least eIF4A, eIF4E and eIF4G.

The protein resides in the cytoplasm. The catalysed reaction is ATP + H2O = ADP + phosphate + H(+). Functionally, ATP-dependent RNA helicase which is a subunit of the eIF4F complex involved in cap recognition and is required for mRNA binding to ribosome. In the current model of translation initiation, eIF4A unwinds RNA secondary structures in the 5'-UTR of mRNAs which is necessary to allow efficient binding of the small ribosomal subunit, and subsequent scanning for the initiator codon. In Aspergillus fumigatus (strain ATCC MYA-4609 / CBS 101355 / FGSC A1100 / Af293) (Neosartorya fumigata), this protein is ATP-dependent RNA helicase eIF4A (tif1).